The sequence spans 205 residues: Ribosomal RNA small subunit methyltransferase G (205 aa).

S-adenosyl-L-methionine-binding positions include glycine 76, leucine 81, 127-128, and arginine 140; that span reads IE.

It belongs to the methyltransferase superfamily. RNA methyltransferase RsmG family.

It localises to the cytoplasm. The catalysed reaction is guanosine(527) in 16S rRNA + S-adenosyl-L-methionine = N(7)-methylguanosine(527) in 16S rRNA + S-adenosyl-L-homocysteine. In terms of biological role, specifically methylates the N7 position of guanine in position 527 of 16S rRNA. This Francisella tularensis subsp. tularensis (strain FSC 198) protein is Ribosomal RNA small subunit methyltransferase G.